We begin with the raw amino-acid sequence, 410 residues long: Protein TIC 214 (410 aa).

Transmembrane regions (helical) follow at residues 22-42 (FVFGLICGSLLGTSMNVGSFI), 61-81 (GSAISETFFLFLILFGYIGVI), 87-107 (LEPSLTFIITVFCADTIIGFL), 131-151 (AVIVFGNPGSTWGATSLITSI), 161-181 (LFLFGVFLGIFVIGCGIGFLI), and 210-230 (LALCILILSTIYYHWQVYIGL).

It belongs to the TIC214 family. In terms of assembly, part of the Tic complex.

The protein localises to the plastid. The protein resides in the chloroplast inner membrane. In terms of biological role, involved in protein precursor import into chloroplasts. May be part of an intermediate translocation complex acting as a protein-conducting channel at the inner envelope. This chain is Protein TIC 214, found in Mesostigma viride (Green alga).